The sequence spans 197 residues: Small ribosomal subunit protein uS7 (197 aa).

The protein belongs to the universal ribosomal protein uS7 family.

In Cicer arietinum (Chickpea), this protein is Small ribosomal subunit protein uS7 (RPS5).